Consider the following 221-residue polypeptide: UPF0758 protein NTHI1125 (221 aa).

The MPN domain maps to 98-221 (PIINDLETVK…CYSFAENCLL (124 aa)). His-170, His-172, and Asp-183 together coordinate Zn(2+). Residues 170 to 183 (HNHPSGITEPSYSD) carry the JAMM motif motif.

Belongs to the UPF0758 family.

The polypeptide is UPF0758 protein NTHI1125 (Haemophilus influenzae (strain 86-028NP)).